A 326-amino-acid chain; its full sequence is Serine protease 38 (326 aa).

Residues 1–32 (MAAPASVMGPLGPSALGLLLLLLVVAPPRVAA) form the signal peptide. Residues 33–59 (LVHRQPENQGISLTGSVACGRPSMEGK) constitute a propeptide, activation peptide. The Peptidase S1 domain occupies 60-293 (ILGGVPAPER…FSKWICDNIE (234 aa)). A disulfide bond links Cys-85 and Cys-101. The active-site Charge relay system is His-100. Asn-125 carries N-linked (GlcNAc...) asparagine glycosylation. Asp-150 serves as the catalytic Charge relay system. 3 disulfide bridges follow: Cys-183–Cys-251, Cys-214–Cys-230, and Cys-241–Cys-269. Ser-245 serves as the catalytic Charge relay system.

It belongs to the peptidase S1 family.

The protein localises to the secreted. In Homo sapiens (Human), this protein is Serine protease 38 (PRSS38).